We begin with the raw amino-acid sequence, 405 residues long: Argininosuccinate synthase (405 aa).

ATP-binding positions include 10–18 (AYSGGLDTS) and Ala-37. Positions 88 and 93 each coordinate L-citrulline. Gly-118 lines the ATP pocket. L-aspartate contacts are provided by Thr-120, Asn-124, and Asp-125. L-citrulline is bound at residue Asn-124. 5 residues coordinate L-citrulline: Arg-128, Ser-179, Ser-188, Glu-264, and Tyr-276.

The protein belongs to the argininosuccinate synthase family. Type 1 subfamily. Homotetramer.

It localises to the cytoplasm. It carries out the reaction L-citrulline + L-aspartate + ATP = 2-(N(omega)-L-arginino)succinate + AMP + diphosphate + H(+). It participates in amino-acid biosynthesis; L-arginine biosynthesis; L-arginine from L-ornithine and carbamoyl phosphate: step 2/3. This is Argininosuccinate synthase from Pseudomonas fluorescens (strain Pf0-1).